The primary structure comprises 354 residues: Fructose-bisphosphate aldolase (354 aa).

Ser50 provides a ligand contact to D-glyceraldehyde 3-phosphate. The active-site Proton donor is the Asp83. 4 residues coordinate Zn(2+): His84, Asp105, Glu142, and His198. Dihydroxyacetone phosphate is bound at residue Gly199. Zn(2+) is bound at residue His232. Dihydroxyacetone phosphate is bound by residues 233–235 (GSS) and 275–278 (NIDT).

The protein belongs to the class II fructose-bisphosphate aldolase family. Zn(2+) is required as a cofactor.

The catalysed reaction is beta-D-fructose 1,6-bisphosphate = D-glyceraldehyde 3-phosphate + dihydroxyacetone phosphate. The protein operates within carbohydrate degradation; glycolysis; D-glyceraldehyde 3-phosphate and glycerone phosphate from D-glucose: step 4/4. Functionally, catalyzes the aldol condensation of dihydroxyacetone phosphate (DHAP or glycerone-phosphate) with glyceraldehyde 3-phosphate (G3P) to form fructose 1,6-bisphosphate (FBP) in gluconeogenesis and the reverse reaction in glycolysis. This Pseudomonas aeruginosa (strain ATCC 15692 / DSM 22644 / CIP 104116 / JCM 14847 / LMG 12228 / 1C / PRS 101 / PAO1) protein is Fructose-bisphosphate aldolase (fba).